A 320-amino-acid polypeptide reads, in one-letter code: Protoheme IX farnesyltransferase (320 aa).

Residues 1–24 are disordered; it reads MSMITERPVSDPAGQSVSATGDGA. 8 consecutive transmembrane segments (helical) span residues 33-55, 68-88, 117-137, 140-160, 183-203, 241-261, 262-282, and 300-320; these read AVVA…VTTV, LWLM…ASVL, NALI…AVFT, LAAG…TAWL, WAAV…VVFF, ILVF…LGAG, MGPI…VEAH, and FHWS…DALI.

It belongs to the UbiA prenyltransferase family. Protoheme IX farnesyltransferase subfamily.

Its subcellular location is the cell membrane. It carries out the reaction heme b + (2E,6E)-farnesyl diphosphate + H2O = Fe(II)-heme o + diphosphate. It functions in the pathway porphyrin-containing compound metabolism; heme O biosynthesis; heme O from protoheme: step 1/1. Functionally, converts heme B (protoheme IX) to heme O by substitution of the vinyl group on carbon 2 of heme B porphyrin ring with a hydroxyethyl farnesyl side group. This Salinispora tropica (strain ATCC BAA-916 / DSM 44818 / JCM 13857 / NBRC 105044 / CNB-440) protein is Protoheme IX farnesyltransferase.